The sequence spans 304 residues: UDP-N-acetylenolpyruvoylglucosamine reductase (304 aa).

An FAD-binding PCMH-type domain is found at 33–198 (KVGGPVDILL…LRATFNLVNG (166 aa)). Residue Arg-177 is part of the active site. Ser-227 functions as the Proton donor in the catalytic mechanism. Glu-297 is an active-site residue.

Belongs to the MurB family. FAD is required as a cofactor.

It localises to the cytoplasm. It catalyses the reaction UDP-N-acetyl-alpha-D-muramate + NADP(+) = UDP-N-acetyl-3-O-(1-carboxyvinyl)-alpha-D-glucosamine + NADPH + H(+). Its pathway is cell wall biogenesis; peptidoglycan biosynthesis. Cell wall formation. This is UDP-N-acetylenolpyruvoylglucosamine reductase from Clostridium beijerinckii (strain ATCC 51743 / NCIMB 8052) (Clostridium acetobutylicum).